The chain runs to 71 residues: Small ribosomal subunit protein bS21 (71 aa).

Residues 49–59 show a composition bias toward basic residues; that stretch reads AAAAVKRHAKK. Residues 49 to 71 are disordered; that stretch reads AAAAVKRHAKKVQREQRRSVRLY. Residues 60-71 are compositionally biased toward basic and acidic residues; it reads VQREQRRSVRLY.

This sequence belongs to the bacterial ribosomal protein bS21 family.

The protein is Small ribosomal subunit protein bS21 of Stutzerimonas stutzeri (strain A1501) (Pseudomonas stutzeri).